A 730-amino-acid chain; its full sequence is Hepatocyte growth factor (730 aa).

A signal peptide spans 1–31; that stretch reads MWVTKLLPLLVLQQLLLHLLLLPVAVPRAEG. Position 32 is a pyrrolidone carboxylic acid (glutamine 32). Positions 37–123 constitute a PAN domain; sequence NTLHEFKKSA…HEFDLYENKD (87 aa). 8 cysteine pairs are disulfide-bonded: cysteine 70/cysteine 96, cysteine 74/cysteine 84, cysteine 128/cysteine 206, cysteine 149/cysteine 189, cysteine 177/cysteine 201, cysteine 211/cysteine 288, cysteine 232/cysteine 271, and cysteine 260/cysteine 283. Kringle domains follow at residues 128 to 206 and 211 to 288; these read CIIG…IPQC and CMTC…IKMC. Residue asparagine 294 is glycosylated (N-linked (GlcNAc...) asparagine). Disulfide bonds link cysteine 305–cysteine 383, cysteine 326–cysteine 365, cysteine 354–cysteine 377, cysteine 391–cysteine 469, cysteine 412–cysteine 452, cysteine 440–cysteine 464, cysteine 487–cysteine 606, cysteine 519–cysteine 535, cysteine 614–cysteine 681, cysteine 644–cysteine 660, and cysteine 671–cysteine 699. 2 Kringle domains span residues 305–383 and 391–469; these read CIQG…IPKC and CYRG…IFRC. Asparagine 402 is a glycosylation site (N-linked (GlcNAc...) asparagine). The Peptidase S1 domain occupies 495–723; that stretch reads VVNGIPTRTN…YAKWIHKIIL (229 aa). Asparagine 568 and asparagine 655 each carry an N-linked (GlcNAc...) asparagine glycan.

This sequence belongs to the peptidase S1 family. Plasminogen subfamily. Dimer of an alpha chain and a beta chain linked by a disulfide bond. Interacts with SRPX2; the interaction increases HGF mitogenic activity. In terms of processing, the single-chain precursor undergoes proteolytic processing by TMPRSS13 resulting in an active two-chain form. The single-chain precursor undergoes proteolytic processing by HGFAC resulting in an active two-chain form.

In terms of biological role, potent mitogen for mature parenchymal hepatocyte cells, seems to be a hepatotrophic factor, and acts as a growth factor for a broad spectrum of tissues and cell types. Activating ligand for the receptor tyrosine kinase MET by binding to it and promoting its dimerization. Activates MAPK signaling following TMPRSS13 cleavage and activation. The polypeptide is Hepatocyte growth factor (HGF) (Canis lupus familiaris (Dog)).